The chain runs to 20 residues: Short cationic peptide-4a (20 aa).

The residue at position 20 (Glu20) is a Glutamic acid 1-amide.

As to expression, expressed by the venom gland.

The protein localises to the secreted. The protein is Short cationic peptide-4a of Cupiennius salei (American wandering spider).